The sequence spans 1019 residues: Photoactivated adenylate cyclase subunit alpha-like protein 1224-5/1F (1019 aa).

The region spanning 55 to 148 (LRRLMYLSAS…GRMYGWWHLK (94 aa)) is the BLUF 1 domain. Residues 204–332 (VVTVIYLVEF…DWINSASRIT (129 aa)) enclose the Guanylate cyclase 1 domain. In terms of domain architecture, BLUF 2 spans 467-559 (LITLTYISQA…GVYGSPLDMT (93 aa)). A Guanylate cyclase 2 domain is found at 615–744 (VMLATAISSF…EVRARVLEVE (130 aa)). A disordered region spans residues 825-863 (NISCRGGNPPAGGIPTSPKVRPPGRTNSVSSYTPDPKQA).

Belongs to the adenylyl cyclase class-4/guanylyl cyclase family. As to quaternary structure, heterotetramer of two alpha and two beta subunits.

The protein localises to the cell projection. It localises to the cilium. It is found in the flagellum. The polypeptide is Photoactivated adenylate cyclase subunit alpha-like protein 1224-5/1F (Euglena gracilis).